We begin with the raw amino-acid sequence, 40 residues long: Photosystem II reaction center protein J (40 aa).

The chain crosses the membrane as a helical span at residues 8 to 28; that stretch reads IPLWIIGTGAGILVIGLIGIF.

This sequence belongs to the PsbJ family. In terms of assembly, PSII is composed of 1 copy each of membrane proteins PsbA, PsbB, PsbC, PsbD, PsbE, PsbF, PsbH, PsbI, PsbJ, PsbK, PsbL, PsbM, PsbT, PsbX, PsbY, PsbZ, Psb30/Ycf12, at least 3 peripheral proteins of the oxygen-evolving complex and a large number of cofactors. It forms dimeric complexes.

The protein localises to the plastid. The protein resides in the chloroplast thylakoid membrane. One of the components of the core complex of photosystem II (PSII). PSII is a light-driven water:plastoquinone oxidoreductase that uses light energy to abstract electrons from H(2)O, generating O(2) and a proton gradient subsequently used for ATP formation. It consists of a core antenna complex that captures photons, and an electron transfer chain that converts photonic excitation into a charge separation. The polypeptide is Photosystem II reaction center protein J (Aethionema grandiflorum (Persian stone-cress)).